Here is a 363-residue protein sequence, read N- to C-terminus: uncharacterized protein (363 aa).

A disordered region spans residues 35 to 262 (TVPGPPGAES…GLSPCCGDGG (228 aa)). Residues 56–75 (AVSSSRNPNSAGRTPNSYLT) are compositionally biased toward polar residues. Over residues 100 to 116 (GADPALGSLPAAGLSGL) the composition is skewed to low complexity.

This is an uncharacterized protein from Homo sapiens (Human).